The following is a 549-amino-acid chain: MKLALALSLIASVAAAPTATLANGDTITGLNAIINEAFLGIPFAEPPVGNLRFKDPVPYRGSLNGQSFTAYGPSCMQQNPEGTYEENLPKVALDLVMQSKVFQAVLPNSEDCLTINVVRPPGTKAGANLPVMLWIFGGGFEIGSPTIFPPAQMVSKSVLMGKPIIHVAVNYRLASFGFLAGPDIKAEGSSNAGLKDQRLGMQWVADNIAGFGGDPSKVTIFGESAGSMSVLCHLLWNGGDNTYKGKPLFRAGIMQSGAMVPSDPVDGTYGTQIYDTLVASTGCSSASNKLACLRGLSTQALLDATNDTPGFLSYTSLRLSYLPRPDGANITDDMYKLVRDGKYASVPVIIGDQNDEGFLFGLSSLNTTTEADAEAYLRKSFIHATDADITALKAAYPSDVTQGSPFDTGILNALTPQLKRINAVLGDLTFTLSRRYFLNHYTGGPKYSFLSKQLSGLPILGTFHANDIVWQHFLLGSGSVIYNNAFIAFATDLDPNTAGLSVQWPKSTSSSQAGDNLMQISALGLYTGKDNFRTAGYNALFADPSHFFV.

Positions 1 to 15 are cleaved as a signal peptide; sequence MKLALALSLIASVAA. A disulfide bridge connects residues Cys-75 and Cys-112. Catalysis depends on Ser-224, which acts as the Acyl-ester intermediate. Cys-283 and Cys-292 are oxidised to a cystine. Asn-329 is a glycosylation site (N-linked (GlcNAc...) asparagine). The active-site Charge relay system is Glu-356. A glycan (N-linked (GlcNAc...) asparagine) is linked at Asn-366. The active-site Charge relay system is His-464.

It belongs to the type-B carboxylesterase/lipase family.

The catalysed reaction is a triacylglycerol + H2O = a diacylglycerol + a fatty acid + H(+). The chain is Lipase 5 (LIP5) from Diutina rugosa (Yeast).